The primary structure comprises 42 residues: Photosystem II reaction center protein J (42 aa).

The chain crosses the membrane as a helical span at residues 10-30 (IPLWLVGTVVGIAALTLLSVF).

Belongs to the PsbJ family. PSII is composed of 1 copy each of membrane proteins PsbA, PsbB, PsbC, PsbD, PsbE, PsbF, PsbH, PsbI, PsbJ, PsbK, PsbL, PsbM, PsbT, PsbX, PsbY, PsbZ, Psb30/Ycf12, at least 3 peripheral proteins of the oxygen-evolving complex and a large number of cofactors. It forms dimeric complexes.

Its subcellular location is the plastid. It localises to the chloroplast thylakoid membrane. Functionally, one of the components of the core complex of photosystem II (PSII). PSII is a light-driven water:plastoquinone oxidoreductase that uses light energy to abstract electrons from H(2)O, generating O(2) and a proton gradient subsequently used for ATP formation. It consists of a core antenna complex that captures photons, and an electron transfer chain that converts photonic excitation into a charge separation. In Tupiella akineta (Green alga), this protein is Photosystem II reaction center protein J.